Reading from the N-terminus, the 330-residue chain is Aspartate--ammonia ligase (330 aa).

This sequence belongs to the class-II aminoacyl-tRNA synthetase family. AsnA subfamily.

It localises to the cytoplasm. The catalysed reaction is L-aspartate + NH4(+) + ATP = L-asparagine + AMP + diphosphate + H(+). It participates in amino-acid biosynthesis; L-asparagine biosynthesis; L-asparagine from L-aspartate (ammonia route): step 1/1. In Streptococcus equi subsp. zooepidemicus (strain H70), this protein is Aspartate--ammonia ligase.